The following is a 412-amino-acid chain: Putative competence-damage inducible protein (412 aa).

The protein belongs to the CinA family.

This is Putative competence-damage inducible protein from Clostridium perfringens (strain 13 / Type A).